Reading from the N-terminus, the 393-residue chain is Putative B3 domain-containing protein Os06g0632500 (393 aa).

DNA-binding regions (TF-B3) lie at residues 27–123 (LSVP…FDPG), 141–238 (RPRF…FLQN), and 316–393 (NSFT…VQRR).

Its subcellular location is the nucleus. This chain is Putative B3 domain-containing protein Os06g0632500, found in Oryza sativa subsp. japonica (Rice).